Here is a 371-residue protein sequence, read N- to C-terminus: uncharacterized protein (371 aa).

Residues 20–250 enclose the ABC transporter domain; it reads VTIRNVTKRY…PANIFVAGFI (231 aa). 52–59 provides a ligand contact to ATP; that stretch reads GPSGCGKS.

Belongs to the ABC transporter superfamily.

Its subcellular location is the cell inner membrane. Functionally, probably part of a binding-protein-dependent transport system y4oPQRS. This system probably transports a sugar-like molecule. Probably responsible for energy coupling to the transport system. This is an uncharacterized protein from Sinorhizobium fredii (strain NBRC 101917 / NGR234).